The chain runs to 455 residues: Bifunctional protein GlmU (455 aa).

Residues 1–227 (MGLSVIILAA…CEEVQGVNDR (227 aa)) form a pyrophosphorylase region. UDP-N-acetyl-alpha-D-glucosamine contacts are provided by residues 8-11 (LAAG), lysine 22, glutamine 73, 78-79 (GT), 100-102 (YGD), glycine 137, glutamate 152, asparagine 167, and asparagine 225. Aspartate 102 lines the Mg(2+) pocket. A Mg(2+)-binding site is contributed by asparagine 225. The interval 228 to 248 (WELTKLERYYQRLMAKKLSLA) is linker. The segment at 249–455 (GVTIIDPERF…KGWHRPTKKE (207 aa)) is N-acetyltransferase. The UDP-N-acetyl-alpha-D-glucosamine site is built by arginine 332 and lysine 350. Catalysis depends on histidine 362, which acts as the Proton acceptor. UDP-N-acetyl-alpha-D-glucosamine-binding residues include tyrosine 365 and asparagine 376. Residues alanine 379, 385 to 386 (NY), serine 404, alanine 422, and arginine 439 each bind acetyl-CoA.

It in the N-terminal section; belongs to the N-acetylglucosamine-1-phosphate uridyltransferase family. This sequence in the C-terminal section; belongs to the transferase hexapeptide repeat family. In terms of assembly, homotrimer. Mg(2+) serves as cofactor.

It is found in the cytoplasm. The catalysed reaction is alpha-D-glucosamine 1-phosphate + acetyl-CoA = N-acetyl-alpha-D-glucosamine 1-phosphate + CoA + H(+). It catalyses the reaction N-acetyl-alpha-D-glucosamine 1-phosphate + UTP + H(+) = UDP-N-acetyl-alpha-D-glucosamine + diphosphate. Its pathway is nucleotide-sugar biosynthesis; UDP-N-acetyl-alpha-D-glucosamine biosynthesis; N-acetyl-alpha-D-glucosamine 1-phosphate from alpha-D-glucosamine 6-phosphate (route II): step 2/2. It functions in the pathway nucleotide-sugar biosynthesis; UDP-N-acetyl-alpha-D-glucosamine biosynthesis; UDP-N-acetyl-alpha-D-glucosamine from N-acetyl-alpha-D-glucosamine 1-phosphate: step 1/1. It participates in bacterial outer membrane biogenesis; LPS lipid A biosynthesis. In terms of biological role, catalyzes the last two sequential reactions in the de novo biosynthetic pathway for UDP-N-acetylglucosamine (UDP-GlcNAc). The C-terminal domain catalyzes the transfer of acetyl group from acetyl coenzyme A to glucosamine-1-phosphate (GlcN-1-P) to produce N-acetylglucosamine-1-phosphate (GlcNAc-1-P), which is converted into UDP-GlcNAc by the transfer of uridine 5-monophosphate (from uridine 5-triphosphate), a reaction catalyzed by the N-terminal domain. This is Bifunctional protein GlmU from Coxiella burnetii (strain RSA 493 / Nine Mile phase I).